The chain runs to 362 residues: MAADMPDPTLQNVVDQKELKWIFVGGKGGVGKTTTSSSLAVALAESGTRNRVLIISTDPAHNLSDAFRQKFTKTPTLVNGFTNLFAMEVDPQPDIGEMEQLEWAQDSFLTELAGSIPGIDEAMSFAEVMKQVQTMDYDTIVFDTAPTGHTLRLLNFPTILEKGLSKLVALKGAMGGMMGQVTRMLGGMAGGGEGAADLPDQLLGKVEGMLDVVRKVSAQFKDPLLTTFVAVCIPEFLSLYETERLVQELAKFEIDCRNIVINQIIFPESVGGSRLLDARVRMQQKYLDQFYELYEDFHILQLPLLEEEVRGPEALKAFAVNLLKPYVPAPPTDAAARQAALVSEVAALKKRVAELEAALAKK.

Residue 27 to 34 participates in ATP binding; sequence KGGVGKTT. The active site involves Asp-58. ATP contacts are provided by Glu-235 and Asn-262.

This sequence belongs to the arsA ATPase family. As to quaternary structure, homodimer. Interacts with SEC61B.

It is found in the cytoplasm. It localises to the cytosol. Its subcellular location is the endoplasmic reticulum. In terms of biological role, ATPase required for the post-translational delivery of tail-anchored (TA) proteins to the endoplasmic reticulum. Recognizes and selectively binds the transmembrane domain of TA proteins in the cytosol. This complex then targets to the endoplasmic reticulum by membrane-bound receptors, where the tail-anchored protein is released for insertion. This process is regulated by ATP binding and hydrolysis. ATP binding drives the homodimer towards the closed dimer state, facilitating recognition of newly synthesized TA membrane proteins. ATP hydrolysis is required for insertion. Subsequently, the homodimer reverts towards the open dimer state, lowering its affinity for the membrane-bound receptor, and returning it to the cytosol to initiate a new round of targeting. The protein is ATPase ARSA2 of Chlamydomonas reinhardtii (Chlamydomonas smithii).